Reading from the N-terminus, the 216-residue chain is Adenylate kinase (216 aa).

10–15 (GAGKGT) contacts ATP. The NMP stretch occupies residues 30 to 59 (STGDIFRANIKEKTPLGIEAKRYIDNGQLV). Residues Thr31, Arg36, 57 to 59 (QLV), 85 to 88 (GFPR), and Gln92 each bind AMP. An LID region spans residues 126–163 (GRRVCTSCGASYHIRFNPPKIEGKCDICDNELIQRKDD). An ATP-binding site is contributed by Arg127. Zn(2+) is bound by residues Cys130 and Cys133. Position 136 to 137 (136 to 137 (SY)) interacts with ATP. Zn(2+) contacts are provided by Cys150 and Cys153. The AMP site is built by Arg160 and Arg171. Glu199 contacts ATP.

It belongs to the adenylate kinase family. Monomer.

The protein localises to the cytoplasm. The enzyme catalyses AMP + ATP = 2 ADP. The protein operates within purine metabolism; AMP biosynthesis via salvage pathway; AMP from ADP: step 1/1. Its function is as follows. Catalyzes the reversible transfer of the terminal phosphate group between ATP and AMP. Plays an important role in cellular energy homeostasis and in adenine nucleotide metabolism. The sequence is that of Adenylate kinase from Clostridium botulinum (strain 657 / Type Ba4).